Here is a 307-residue protein sequence, read N- to C-terminus: MKQPYNHGVLFYHEHSGLKDIHNGIGEVAKSLSSMCKHLSLQLSENKGDIIKYCKSIKNENYSSDVDVLFILGGDGTLNELVNGVMQYQLNLPIGVIPGGTFNDFTKTLQLHPNFKTASEQLLTSHAESYDVLKVNDLYVLNFVGLGLIVQNAENVQDGSKDIFGKFSYIRSTVKTLLNPVKFDFSLTVDGETKEGNTSMMLIANGPNIGGGQIPLTDLSPQDGRANTFVFNDQTLNILNDILKKRDSMNWNEITQGIDHISGKHITLSTNPSMKVDIDGEINLETPIEIQVLPKAIQLLTATEQNN.

Positions 3–139 (QPYNHGVLFY…YDVLKVNDLY (137 aa)) constitute a DAGKc domain. Residues Ser44, 74-80 (GDGTLNE), and Thr101 each bind ATP. Mg(2+) contacts are provided by Ser220, Asp223, and Arg225. Glu281 (proton acceptor) is an active-site residue.

It belongs to the diacylglycerol/lipid kinase family. The cofactor is Mg(2+).

Functionally, may catalyze the ATP-dependent phosphorylation of lipids other than diacylglycerol (DAG). This is Putative lipid kinase SE_0507 from Staphylococcus epidermidis (strain ATCC 12228 / FDA PCI 1200).